Reading from the N-terminus, the 332-residue chain is MMKKPVVIGLAVVVLAAVVAGGYWWYQSRQDNGLTLYGNVDIRTVNLSFRVGGRVESLAVDEGDAIKAGQVLGELDHKPYEIALMQAKAGVSVAQAQYDLMLAGYRDEEIAQAAAAVKQAQAAYDYEQNFYNRQQGLWKSRTISANDLENARSSRDQAQATLKSAQDKLRQYRSGNREQDIAQAKASLEQAQAQLAQAELNLQDSTLIAPSDGTLLTRAVEPGTVLNEGGTVFTVSLTRPVWVRAYVDERNLDQAQPGRKVLLYTDGRPDKPYHGQIGFVSPTAEFTPKTVETPDLRTDLVYRLRIVVTDADDALRQGMPVTVQFGDEAGHE.

The N-terminal stretch at 1 to 16 is a signal peptide; sequence MMKKPVVIGLAVVVLA. Positions 141 to 210 form a coiled coil; that stretch reads RTISANDLEN…NLQDSTLIAP (70 aa).

Belongs to the UPF0194 family.

The protein resides in the periplasm. This is UPF0194 membrane protein YbhG (ybhG) from Shigella flexneri.